The chain runs to 318 residues: Ribonuclease Z (318 aa).

Zn(2+)-binding residues include His-63, His-65, Asp-67, His-68, His-142, Asp-213, and His-273. Asp-67 acts as the Proton acceptor in catalysis.

It belongs to the RNase Z family. Homodimer. It depends on Zn(2+) as a cofactor.

It carries out the reaction Endonucleolytic cleavage of RNA, removing extra 3' nucleotides from tRNA precursor, generating 3' termini of tRNAs. A 3'-hydroxy group is left at the tRNA terminus and a 5'-phosphoryl group is left at the trailer molecule.. Zinc phosphodiesterase, which displays some tRNA 3'-processing endonuclease activity. Probably involved in tRNA maturation, by removing a 3'-trailer from precursor tRNA. The protein is Ribonuclease Z of Leuconostoc mesenteroides subsp. mesenteroides (strain ATCC 8293 / DSM 20343 / BCRC 11652 / CCM 1803 / JCM 6124 / NCDO 523 / NBRC 100496 / NCIMB 8023 / NCTC 12954 / NRRL B-1118 / 37Y).